Here is a 127-residue protein sequence, read N- to C-terminus: Small ribosomal subunit protein uS13 (127 aa).

The tract at residues 93–127 (RRSLPVRGQRTHTNARTRKGPRRGTVAGKKKATKT) is disordered.

Belongs to the universal ribosomal protein uS13 family. Part of the 30S ribosomal subunit. Forms a loose heterodimer with protein S19. Forms two bridges to the 50S subunit in the 70S ribosome.

Functionally, located at the top of the head of the 30S subunit, it contacts several helices of the 16S rRNA. In the 70S ribosome it contacts the 23S rRNA (bridge B1a) and protein L5 of the 50S subunit (bridge B1b), connecting the 2 subunits; these bridges are implicated in subunit movement. Contacts the tRNAs in the A and P-sites. The sequence is that of Small ribosomal subunit protein uS13 from Acidobacterium capsulatum (strain ATCC 51196 / DSM 11244 / BCRC 80197 / JCM 7670 / NBRC 15755 / NCIMB 13165 / 161).